A 101-amino-acid polypeptide reads, in one-letter code: MAKLSSINKNEKRKKMAKAYAGKYSRLKAAANDKSLDETDRLVARLKMAELPRNANPTRVRNRCALTGRPRGYYRKFQLCRIQLRDLANKGLIPGVTKSSW.

It belongs to the universal ribosomal protein uS14 family. As to quaternary structure, part of the 30S ribosomal subunit. Contacts proteins S3 and S10.

Binds 16S rRNA, required for the assembly of 30S particles and may also be responsible for determining the conformation of the 16S rRNA at the A site. The chain is Small ribosomal subunit protein uS14 from Zymomonas mobilis subsp. mobilis (strain ATCC 31821 / ZM4 / CP4).